We begin with the raw amino-acid sequence, 150 residues long: Large ribosomal subunit protein bL9 (150 aa).

Belongs to the bacterial ribosomal protein bL9 family.

In terms of biological role, binds to the 23S rRNA. In Acidovorax ebreus (strain TPSY) (Diaphorobacter sp. (strain TPSY)), this protein is Large ribosomal subunit protein bL9.